The chain runs to 187 residues: GTP cyclohydrolase 1 (187 aa).

Positions 76, 79, and 148 each coordinate Zn(2+).

It belongs to the GTP cyclohydrolase I family. Homomer.

The catalysed reaction is GTP + H2O = 7,8-dihydroneopterin 3'-triphosphate + formate + H(+). Its pathway is cofactor biosynthesis; 7,8-dihydroneopterin triphosphate biosynthesis; 7,8-dihydroneopterin triphosphate from GTP: step 1/1. This is GTP cyclohydrolase 1 from Desulforamulus reducens (strain ATCC BAA-1160 / DSM 100696 / MI-1) (Desulfotomaculum reducens).